Here is a 179-residue protein sequence, read N- to C-terminus: Large ribosomal subunit protein uL5 (179 aa).

It belongs to the universal ribosomal protein uL5 family. As to quaternary structure, part of the 50S ribosomal subunit; part of the 5S rRNA/L5/L18/L25 subcomplex. Contacts the 5S rRNA and the P site tRNA. Forms a bridge to the 30S subunit in the 70S ribosome.

Functionally, this is one of the proteins that bind and probably mediate the attachment of the 5S RNA into the large ribosomal subunit, where it forms part of the central protuberance. In the 70S ribosome it contacts protein S13 of the 30S subunit (bridge B1b), connecting the 2 subunits; this bridge is implicated in subunit movement. Contacts the P site tRNA; the 5S rRNA and some of its associated proteins might help stabilize positioning of ribosome-bound tRNAs. This is Large ribosomal subunit protein uL5 from Burkholderia cenocepacia (strain HI2424).